Reading from the N-terminus, the 418-residue chain is MESYIQNLFAERIGGKKFGKEDVIYKFEKIKRAKQEAMKRHPDMELIDMGVGEPDEMADPEVIRVLCEEAKKWENRGYADNGIQELKDAVPPYMEKVYGVKDIDPVNEVIHSIGSKPALAYITSAFINPGDVCLMTVPGYPVTATHTKWYGGEVYNLPLLEENDFLPDLESIPEDIKKRAKILYLNYPNNPTGAQATKKFYKEVVDFAFENEVIVVQDAAYGALVYDGKPLSFLSVKDAKEVGVEIHSFSKAFNMTGWRLAFLVGNELIIKAFATVKDNFDSGQFIPIQKAGIYCLQHPEITERVRQKYERRLRKMVKILNEVGFKARMPGGTFYLYVKSPTKANGIEFKTAEDFSQYLIKEKLISTVPWDDAGHYLRLAACFVAKDENGNPTTEEKYEDMVLEEFKRRLEGMDLEFE.

Substrate contacts are provided by Tyr-25 and Gly-52. Pyridoxal 5'-phosphate-binding positions include Tyr-78, 115 to 116 (SK), Tyr-140, Asn-190, Tyr-221, and 248 to 250 (SFS). Positions 116, 140, and 190 each coordinate substrate. Lys-251 carries the N6-(pyridoxal phosphate)lysine modification. Arg-259 lines the pyridoxal 5'-phosphate pocket.

This sequence belongs to the class-I pyridoxal-phosphate-dependent aminotransferase family. In terms of assembly, homodimer. Pyridoxal 5'-phosphate is required as a cofactor.

It is found in the cytoplasm. It catalyses the reaction (2S,6S)-2,6-diaminopimelate + 2-oxoglutarate = (S)-2,3,4,5-tetrahydrodipicolinate + L-glutamate + H2O + H(+). It functions in the pathway amino-acid biosynthesis; L-lysine biosynthesis via DAP pathway; LL-2,6-diaminopimelate from (S)-tetrahydrodipicolinate (aminotransferase route): step 1/1. Involved in the synthesis of meso-diaminopimelate (m-DAP or DL-DAP), required for both lysine and peptidoglycan biosynthesis. Catalyzes the direct conversion of tetrahydrodipicolinate to LL-diaminopimelate, a reaction that requires three enzymes in E.coli. This is LL-diaminopimelate aminotransferase (dapL) from Methanocaldococcus jannaschii (strain ATCC 43067 / DSM 2661 / JAL-1 / JCM 10045 / NBRC 100440) (Methanococcus jannaschii).